We begin with the raw amino-acid sequence, 1366 residues long: MTSSKPKKSSRVRKTSKNSKKNNKIIMPTLAKTPPSFKNKVVDKKALKNLVSWAYKTHGTAVTAAMADNLKDLGFKYATQAAVSISVEDLKVPEAKQDLIGQAEAQITSTEECYRLGEITEVERHTKVIDTWTETNERLVDAVKNNFNQNDPLNSVWMMANSGARGNMSQVRQLVGMRGLMANPQGEIIDLPIRTNFREGLTVTEYVISSYGARKGLVDTALRTADSGYLTRRLVDVAQDVIVREEDCGTERSIVIEAEDGKFGSRLIGRLSAEDVLDSEDNLIIPKNTAIDPSLSKTIETSLISTVNIRSPLTCEANRSVCRKCYGWALAHNHLVDLGEAVGIIAAQSIGEPGTQLTMRTFHTGGVSTAESGVVRSKIKGKVEFSSKAKIRGYRTPHGVEAKQAEVDFLLKIIPSGNNSNKAQKIEVTSGSLLFVDDGQEIDSDITVAQITSGAVKKSVEKATKDVICDLAGQVRYDKVLQPKEVTDRQGNITLKAQRLGRLWVLAGDVYNLPPNAKPVISTEKNVEQGTVLAEASQYSEFGGEVRLRESVGDSREVQIVTTSMLLSNFNLIEESTHSGEIFHLESNDGTIYRLNTSPGSKISSGEVIADLADERFRTKTGGLVKYAPGLSVKKARSSKNGFEVSQGGTLLWIPQETHEINKDISLLMTEDMAWIEAGTEVVKDIFSQTSGIVTVTQKNDILREITVRNGSFHECEDEEVLNRFTEEGQLVNPGEKIIDGVDNNEILFVQKLETSKSKGLLLRTVEEFNIPDEAELPELTHVKQEKGPSLGLKAIQRLSYKDGELIKSVEGVELLKTHLSLESFDATPQMTIDVETIKDKSNDSINRLNLVILESILVRRDTISDSSHGSTHTELQVKNNQQVKAGDVIATTQILCKEKGIVQLPDLVENEPIRRLIVEREEDKIKINITGKALVKVGDRVVDGDSISEGEKATSCGEIEEVSSKCVTLRLGRPYMVSPDSVLHVKDGDLVLRGDGLALLVFERQKTGDIVQGLPRIEELLEARRPRDSSTLCKRSGVVQIKEGNDDESVSLSVIERDDSINEYQLLIGQNIMVSDGQQVKGGELLTDGPINPHELLDCLFTDIKDQKPLMDAARESISKLQRRMVNEVQNVYKSQGVAIDDKHIEVIVRQMTSKVRIEDAGDTTLLPGELIELRQVEDTNQAMSITGGAPAEFTPVLLGITKASLNTDSFISAASFQETTRVLTEAAIEGKSDWLRGLKENVIIGRLIPAGTGFSGFVEELASEAGPHPDILAEESGGYRRAQNLRPDYTVDMPQSPTVSSTAILDDPSDEDLETTRNRHGIDPSSSNFAAFARPNAENQFSEDQLPDPAALEGLQEEGLLSDE.

A compositionally biased stretch (basic residues) spans 1–23 (MTSSKPKKSSRVRKTSKNSKKNN). The disordered stretch occupies residues 1–25 (MTSSKPKKSSRVRKTSKNSKKNNKI). Zn(2+) contacts are provided by cysteine 248, cysteine 315, cysteine 322, and cysteine 325. Residues 1290 to 1366 (DYTVDMPQSP…LQEEGLLSDE (77 aa)) are disordered. A compositionally biased stretch (polar residues) spans 1295-1305 (MPQSPTVSSTA). Residues 1354 to 1366 (LEGLQEEGLLSDE) are compositionally biased toward low complexity.

It belongs to the RNA polymerase beta' chain family. RpoC2 subfamily. In cyanobacteria the RNAP catalytic core is composed of 2 alpha, 1 beta, 1 beta', 1 gamma and 1 omega subunit. When a sigma factor is associated with the core the holoenzyme is formed, which can initiate transcription. Requires Zn(2+) as cofactor.

The enzyme catalyses RNA(n) + a ribonucleoside 5'-triphosphate = RNA(n+1) + diphosphate. DNA-dependent RNA polymerase catalyzes the transcription of DNA into RNA using the four ribonucleoside triphosphates as substrates. In Prochlorococcus marinus (strain MIT 9515), this protein is DNA-directed RNA polymerase subunit beta'.